The chain runs to 295 residues: bZIP transcription factor RISBZ5 (295 aa).

Basic and acidic residues predominate over residues 16–26; the sequence is REEAGAGDRKP. The tract at residues 16–157 is disordered; that stretch reads REEAGAGDRK…ARRSRRRKQA (142 aa). The span at 109 to 119 shows a compositional bias: acidic residues; that stretch reads SDSDSDCDSLL. Basic and acidic residues predominate over residues 120–136; sequence EAERSPRLRGTKSTETK. The bZIP domain maps to 134 to 197; sequence ETKRIRRMVS…NTAVTDNRIL (64 aa). The basic motif stretch occupies residues 136–155; the sequence is KRIRRMVSNRESARRSRRRK. The segment at 162-176 is leucine-zipper; it reads LESQVEQLKGENSSL.

Homodimer.

It is found in the nucleus. In terms of biological role, probable transcription factor that binds to the DNA specific sequence 5'-TGAGTCA-3' found in seed storage protein gene promoters. May function as a negative regulator in cold and drought stress responses. The chain is bZIP transcription factor RISBZ5 from Oryza sativa subsp. japonica (Rice).